The primary structure comprises 66 residues: Light-harvesting protein B-800-850 alpha chain B (66 aa).

The Cytoplasmic segment spans residues 1-11 (MNQGRIWTVVN). Residues 12–35 (PGVGLPLLLGSVTVIAILVHYAVL) traverse the membrane as a helical segment. H31 is an a bacteriochlorophyll binding site. Residues 36 to 66 (SNTTWFPKYWNGATVAAPAAAPAPAAPAAKK) are Periplasmic-facing.

It belongs to the antenna complex alpha subunit family. The core complex is formed by different alpha and beta chains, binding bacteriochlorophyll molecules, and arranged most probably in tetrameric structures disposed around the reaction center. The non-pigmented gamma chains may constitute additional components.

The protein resides in the cell inner membrane. In terms of biological role, antenna complexes are light-harvesting systems, which transfer the excitation energy to the reaction centers. The chain is Light-harvesting protein B-800-850 alpha chain B (pucAB) from Rhodopseudomonas palustris (strain ATCC BAA-98 / CGA009).